Reading from the N-terminus, the 656-residue chain is Nuclear elongation and deformation protein 1 (656 aa).

2 positions are modified to phosphoserine: Ser-99 and Ser-103. The span at Ser-99 to Glu-118 shows a compositional bias: polar residues. The tract at residues Ser-99–Asp-121 is disordered. Thr-106 carries the post-translational modification Phosphothreonine. Phosphoserine is present on residues Ser-107, Ser-159, and Ser-286. Disordered regions lie at residues Val-282–Ser-328 and Ser-587–Val-656. Low complexity predominate over residues Pro-291–Ser-300. Phosphoserine is present on residues Ser-318, Ser-321, and Ser-587. The segment covering Ser-318 to Ser-328 has biased composition (polar residues). Residues Lys-596 to Lys-609 are compositionally biased toward low complexity. Residues Phe-640–Val-656 show a composition bias toward acidic residues.

The protein belongs to the lipin family. Interacts with dis3, pim1 and nup189.

May have a role in the maintenance of the nuclear envelope structure and in minichromosome stability. The protein is Nuclear elongation and deformation protein 1 (ned1) of Schizosaccharomyces pombe (strain 972 / ATCC 24843) (Fission yeast).